A 57-amino-acid chain; its full sequence is MPIGPGSLAVIAIVALIIFGPKKLPELGKAAGDTLREFKNATKGLTSDEEEKKKEDQ.

A helical membrane pass occupies residues 1–21 (MPIGPGSLAVIAIVALIIFGP).

It belongs to the TatA/E family. Forms a complex with TatCy. Two types of complexes exist: one composed of TatAy and TatCy, and another composed only of TatAy. Cytosolic TatA forms large complexes or aggregates.

It localises to the cell membrane. Its subcellular location is the cytoplasm. The protein resides in the cytosol. Functionally, part of the twin-arginine translocation (Tat) system that transports large folded proteins containing a characteristic twin-arginine motif in their signal peptide across membranes. TatA could form the protein-conducting channel of the Tat system. Required for YwbN secretion. The polypeptide is Sec-independent protein translocase protein TatAy (Bacillus subtilis (strain 168)).